The chain runs to 971 residues: Exportin-2 (971 aa).

Residues Ala29–Thr102 enclose the Importin N-terminal domain.

Belongs to the XPO2/CSE1 family. Interacts with cftr. Detected in larval gut, liver, exocrine pancreas and part of the brain and retina at 96 hpf.

Its subcellular location is the cytoplasm. It localises to the nucleus. It is found in the apical cell membrane. The protein localises to the basal cell membrane. The protein resides in the lateral cell membrane. Its function is as follows. Export receptor for importin alpha. Mediates importin-alpha re-export from the nucleus to the cytoplasm after import substrates have been released into the nucleoplasm. Negatively regulates fluid secretion and plays a role in fluid homeostasis by down-regulating cftr activity. The protein is Exportin-2 (cse1l) of Danio rerio (Zebrafish).